The chain runs to 141 residues: MKSKKQILRLRKRAEFLTVRNGEKRRGPLFLMAVRERTEEESNAAKTGDNPRVGFTVTKKNGNAVIRNRIRRRLKEAIRCHAGRDMAPSTDYVIVAREQALNAPFSQLTEELSRRITAKGERRSGGKRRTERPEPGPVNGK.

Disordered stretches follow at residues 37-56 (RTEE…VGFT) and 114-141 (RRIT…VNGK). The span at 114-124 (RRITAKGERRS) shows a compositional bias: basic and acidic residues.

Belongs to the RnpA family. In terms of assembly, consists of a catalytic RNA component (M1 or rnpB) and a protein subunit.

The enzyme catalyses Endonucleolytic cleavage of RNA, removing 5'-extranucleotides from tRNA precursor.. In terms of biological role, RNaseP catalyzes the removal of the 5'-leader sequence from pre-tRNA to produce the mature 5'-terminus. It can also cleave other RNA substrates such as 4.5S RNA. The protein component plays an auxiliary but essential role in vivo by binding to the 5'-leader sequence and broadening the substrate specificity of the ribozyme. The protein is Ribonuclease P protein component of Brucella melitensis biotype 1 (strain ATCC 23456 / CCUG 17765 / NCTC 10094 / 16M).